Here is a 305-residue protein sequence, read N- to C-terminus: RNA-binding protein rnp-1 (305 aa).

Residues 3–72 (SKLFVGNLPD…KVVNIKKSTS (70 aa)) enclose the RRM domain. A CCHC-type zinc finger spans residues 84-97 (CFRCQSDEHRTPQC). Positions 284-305 (QQIQHQQATGSPAPVPAPPRLY) are disordered. The segment covering 296-305 (APVPAPPRLY) has biased composition (pro residues).

In terms of tissue distribution, expressed throughout the germline.

RNA-binding protein that is required for the germ line to transition from spermatogenesis to oogenesis and allow for normal oocyte development. This is RNA-binding protein rnp-1 from Caenorhabditis elegans.